A 262-amino-acid chain; its full sequence is 3-methyl-2-oxobutanoate hydroxymethyltransferase (262 aa).

The Mg(2+) site is built by Asp31 and Asp70. Residues 31–32, Asp70, and Lys99 each bind 3-methyl-2-oxobutanoate; that span reads DS. A Mg(2+)-binding site is contributed by Glu101. Catalysis depends on Glu168, which acts as the Proton acceptor.

The protein belongs to the PanB family. Homodecamer; pentamer of dimers. Requires Mg(2+) as cofactor.

The protein resides in the cytoplasm. The enzyme catalyses 3-methyl-2-oxobutanoate + (6R)-5,10-methylene-5,6,7,8-tetrahydrofolate + H2O = 2-dehydropantoate + (6S)-5,6,7,8-tetrahydrofolate. It functions in the pathway cofactor biosynthesis; coenzyme A biosynthesis. Functionally, catalyzes the reversible reaction in which hydroxymethyl group from 5,10-methylenetetrahydrofolate is transferred onto alpha-ketoisovalerate to form ketopantoate. The polypeptide is 3-methyl-2-oxobutanoate hydroxymethyltransferase (Cenarchaeum symbiosum (strain A)).